We begin with the raw amino-acid sequence, 341 residues long: MAVKHKSESLKHEEGAAKKAKTGLLKLKKIMDIESNVVKYSICIPTTVIDNCNNLEQVTFTAYQIARTAVLFNVQEIIVLDQSKDKKHEKKSRSKETISDCLLLATLLQYFVTPPNLLDTTFKKKNKLYLKCASTFPPLNQLPFMNASAEQHYKEGLSIARDSSKGKSDDALTNLVYIGKNQIITLSNQNIPNTARVTVDTERKEVVSPIDAYKGKPLGYHVRMASTLNEVSEGYTKIVWVNSGDFHYDEELSKYHKVETKLPYIAKLKKSSTSEKPCNILLIFGKWGHLKRCFRRSDLESSSLHHYFSGQLQFPASVPQGNIPIQDSLPIALTMFQRWAS.

It belongs to the class IV-like SAM-binding methyltransferase superfamily.

It is found in the nucleus. It localises to the nucleolus. The sequence is that of Putative methyltransferase YGR283C from Saccharomyces cerevisiae (strain ATCC 204508 / S288c) (Baker's yeast).